Reading from the N-terminus, the 193-residue chain is Phosphoheptose isomerase (193 aa).

One can recognise an SIS domain in the interval 37-193; the sequence is LADSFKAGGK…QLIEKEMVKA (157 aa). A substrate-binding site is contributed by 52–54; it reads NGG. 2 residues coordinate Zn(2+): His61 and Glu65. Substrate-binding positions include Glu65, 93–94, 119–121, Ser124, and Gln172; these read ND and STS. 2 residues coordinate Zn(2+): Gln172 and His180.

The protein belongs to the SIS family. GmhA subfamily. As to quaternary structure, homotetramer. The cofactor is Zn(2+).

Its subcellular location is the cytoplasm. It catalyses the reaction 2 D-sedoheptulose 7-phosphate = D-glycero-alpha-D-manno-heptose 7-phosphate + D-glycero-beta-D-manno-heptose 7-phosphate. The protein operates within carbohydrate biosynthesis; D-glycero-D-manno-heptose 7-phosphate biosynthesis; D-glycero-alpha-D-manno-heptose 7-phosphate and D-glycero-beta-D-manno-heptose 7-phosphate from sedoheptulose 7-phosphate: step 1/1. Its function is as follows. Catalyzes the isomerization of sedoheptulose 7-phosphate in D-glycero-D-manno-heptose 7-phosphate. The protein is Phosphoheptose isomerase of Serratia proteamaculans (strain 568).